Consider the following 314-residue polypeptide: Probable cell division protein WhiA (314 aa).

The H-T-H motif DNA-binding region spans 282–314; the sequence is SLKELGELCRPPVSKSGAAHRMRQLMALAESLE.

Belongs to the WhiA family.

Its function is as follows. Involved in cell division and chromosome segregation. This Symbiobacterium thermophilum (strain DSM 24528 / JCM 14929 / IAM 14863 / T) protein is Probable cell division protein WhiA.